Reading from the N-terminus, the 169-residue chain is Group 2 truncated hemoglobin 3-2 (169 aa).

Residue H99 coordinates heme b.

The protein belongs to the truncated hemoglobin family. Group II subfamily. As to quaternary structure, homodimer when ferric.

Its function is as follows. Hemoglobin-like protein that exhibits an unusual concentration-independent binding of O(2) and CO. Required for general plant development and during nodulation. May promote shoot organogenesis from root explants. The polypeptide is Group 2 truncated hemoglobin 3-2 (Medicago truncatula (Barrel medic)).